Here is a 163-residue protein sequence, read N- to C-terminus: SsrA-binding protein (163 aa).

It belongs to the SmpB family.

It is found in the cytoplasm. Functionally, required for rescue of stalled ribosomes mediated by trans-translation. Binds to transfer-messenger RNA (tmRNA), required for stable association of tmRNA with ribosomes. tmRNA and SmpB together mimic tRNA shape, replacing the anticodon stem-loop with SmpB. tmRNA is encoded by the ssrA gene; the 2 termini fold to resemble tRNA(Ala) and it encodes a 'tag peptide', a short internal open reading frame. During trans-translation Ala-aminoacylated tmRNA acts like a tRNA, entering the A-site of stalled ribosomes, displacing the stalled mRNA. The ribosome then switches to translate the ORF on the tmRNA; the nascent peptide is terminated with the 'tag peptide' encoded by the tmRNA and targeted for degradation. The ribosome is freed to recommence translation, which seems to be the essential function of trans-translation. The chain is SsrA-binding protein from Shewanella putrefaciens (strain CN-32 / ATCC BAA-453).